Reading from the N-terminus, the 561-residue chain is Dihydroxy-acid dehydratase 2 (561 aa).

[2Fe-2S] cluster is bound at residue Cys-53. Asp-85 serves as a coordination point for Mg(2+). Cys-126 is a [2Fe-2S] cluster binding site. Asp-127 and Lys-128 together coordinate Mg(2+). An N6-carboxylysine modification is found at Lys-128. Cys-195 provides a ligand contact to [2Fe-2S] cluster. Glu-446 contributes to the Mg(2+) binding site. Catalysis depends on Ser-472, which acts as the Proton acceptor.

It belongs to the IlvD/Edd family. As to quaternary structure, homodimer. Requires [2Fe-2S] cluster as cofactor. The cofactor is Mg(2+).

It carries out the reaction (2R)-2,3-dihydroxy-3-methylbutanoate = 3-methyl-2-oxobutanoate + H2O. The enzyme catalyses (2R,3R)-2,3-dihydroxy-3-methylpentanoate = (S)-3-methyl-2-oxopentanoate + H2O. The protein operates within amino-acid biosynthesis; L-isoleucine biosynthesis; L-isoleucine from 2-oxobutanoate: step 3/4. It participates in amino-acid biosynthesis; L-valine biosynthesis; L-valine from pyruvate: step 3/4. Functionally, functions in the biosynthesis of branched-chain amino acids. Catalyzes the dehydration of (2R,3R)-2,3-dihydroxy-3-methylpentanoate (2,3-dihydroxy-3-methylvalerate) into 2-oxo-3-methylpentanoate (2-oxo-3-methylvalerate) and of (2R)-2,3-dihydroxy-3-methylbutanoate (2,3-dihydroxyisovalerate) into 2-oxo-3-methylbutanoate (2-oxoisovalerate), the penultimate precursor to L-isoleucine and L-valine, respectively. In Acinetobacter baylyi (strain ATCC 33305 / BD413 / ADP1), this protein is Dihydroxy-acid dehydratase 2.